Consider the following 83-residue polypeptide: Large ribosomal subunit protein bL31B (83 aa).

It belongs to the bacterial ribosomal protein bL31 family. Type B subfamily. In terms of assembly, part of the 50S ribosomal subunit.

The polypeptide is Large ribosomal subunit protein bL31B (Lactobacillus gasseri (strain ATCC 33323 / DSM 20243 / BCRC 14619 / CIP 102991 / JCM 1131 / KCTC 3163 / NCIMB 11718 / NCTC 13722 / AM63)).